Reading from the N-terminus, the 406-residue chain is MIGTRLPAWTRVLACGVAGLSLMTISAKAEDVITLGASVQLSGPVANTGRYYQDAYNITIDKINAAGGVKVDGKPYKLALKIYDNQSNVNLSVRQYTQLVTTDKVNFLLGPFASNFALADSVISEKYRIPMVQGGGASDEIYSRNFKYIFGTLAPASNYFGSTVEMLKGLDPKVTNVALVYADDSFDVSVADGTRKLLKDAGFTIAADEKFATNSTDFTSLISQIKSKNVDAVLVAGHETEVLNFVRQSKSLAFDPKLYSFTVGVPTEDFRKALGKDANYAFGMTAWLPSADLKDRWFGDAAKFETEYKARFNYEPDYHAASGASDVEAFAEAIEKANSLDPQKVRDALASIKFDSLYGPIAFDKQGQINLPQIVVQVQDGKLVEIRGPAGQVNPPQYPMPAWNAR.

The first 29 residues, 1-29 (MIGTRLPAWTRVLACGVAGLSLMTISAKA), serve as a signal peptide directing secretion.

This sequence belongs to the leucine-binding protein family.

In terms of biological role, component of an amino-acid transport system. This chain is Leu/Ile/Val-binding protein homolog 5, found in Brucella abortus (strain 2308).